We begin with the raw amino-acid sequence, 47 residues long: PhoP/PhoQ regulator MgrB (47 aa).

A helical transmembrane segment spans residues 6–26 (WVLLIVIIAGCLLLWTQMLNV).

This sequence belongs to the MgrB family. In terms of assembly, may form homooligomers. Probably interacts with the periplasmic domain of PhoQ.

Its subcellular location is the cell inner membrane. PhoP-regulated transcription is redox-sensitive, being activated when the periplasm becomes more reducing. MgrB acts between DsbA/DsbB and PhoP/PhoQ in this pathway. Represses PhoP/PhoQ signaling, possibly by binding to the periplasmic domain of PhoQ, altering its activity and that of downstream effector PhoP. This is PhoP/PhoQ regulator MgrB from Klebsiella pneumoniae (strain 342).